A 226-amino-acid polypeptide reads, in one-letter code: GTP-binding nuclear protein Ran (226 aa).

The Small GTPase Ran-type domain occupies 3 to 184 (DPISFKVILV…LSILRTLLND (182 aa)). A GTP-binding site is contributed by 14–21 (DGATGKTT). Positions 33-41 (KQYISTIGV) are switch-I. GTP-binding positions include G70, 135-138 (NKCD), and 163-165 (SAK). Residues 70–86 (GQEKFGGLRDGYYVDSD) form a switch-II region.

It belongs to the small GTPase superfamily. Ran family. In terms of assembly, found in a nuclear export complex with RanGTP, exportin and pre-miRNA.

It localises to the nucleus. GTP-binding protein involved in nucleocytoplasmic transport. Required for the import of protein into the nucleus and also for RNA export. Involved in chromatin condensation and control of cell cycle. This is GTP-binding nuclear protein Ran from Giardia intestinalis (Giardia lamblia).